The primary structure comprises 265 residues: 5'-nucleotidase SurE (265 aa).

4 residues coordinate a divalent metal cation: aspartate 12, aspartate 13, serine 43, and asparagine 91.

The protein belongs to the SurE nucleotidase family. Requires a divalent metal cation as cofactor.

It is found in the cytoplasm. The catalysed reaction is a ribonucleoside 5'-phosphate + H2O = a ribonucleoside + phosphate. In terms of biological role, nucleotidase that shows phosphatase activity on nucleoside 5'-monophosphates. This is 5'-nucleotidase SurE from Haloquadratum walsbyi (strain DSM 16790 / HBSQ001).